Reading from the N-terminus, the 577-residue chain is MESKGSWTVADAVDYKGRPADKSKTGGWITAALILGIEVVERLSTMGIAVNLVTYLMETMHLPSSTSANIVTDFMGTSFLLCLLGGFLADSFLGRFKTIGIFSTIQALGTGALAVATKLPELRPPTCHHGEACIPATAFQMTILYVSLYLIALGTGGLKSSISGFGSDQFDDKDPKEKAHMAFFFNRFFFFISMGTLLAVTVLVYMQDEVGRSWAYGICTVSMAIAIVIFLCGTKRYRYKKSQGSPVVQIFQVIAAAFRKRKMELPQSIVYLYEDNPEGIRIEHTDQFHLLDKAAIVAEGDFEQTLDGVAIPNPWKLSSVTKVEEVKMMVRLLPIWATTIIFWTTYAQMITFSVEQASTMRRNIGSFKIPAGSLTVFFVAAILITLAVYDRAIMPFWKKWKGKPGFSSLQRIAIGLVLSTAGMAAAALVEQKRLSVAKSSSQKTLPISVFLLVPQFFLVGAGEAFIYTGQLDFFITQSPKGMKTMSTGLFLTTLSLGFFVSSFLVSIVKRVTSTSTDVGWLADNINHGRLDYFYWLLVILSGINFVVYIICALWFKPTKGKDSVEKENGKGFSVEDC.

A run of 12 helical transmembrane segments spans residues Trp28 to Ile48, Phe74 to Gly94, Phe96 to Ala116, Ile134 to Gly154, Phe183 to Leu203, Trp214 to Thr234, Leu332 to Phe352, Ile369 to Tyr389, Leu409 to Val429, Ile447 to Tyr467, Gly488 to Val508, and Trp535 to Phe555.

It belongs to the major facilitator superfamily. Proton-dependent oligopeptide transporter (POT/PTR) (TC 2.A.17) family. In terms of tissue distribution, expressed in shoots, leaves, flowers and siliques. Expressed in leaf petiole.

The protein resides in the membrane. In terms of biological role, low-affinity proton-dependent nitrate transporter. Not involved in dipeptides transport. This chain is Protein NRT1/ PTR FAMILY 6.2 (NPF6.2), found in Arabidopsis thaliana (Mouse-ear cress).